A 271-amino-acid polypeptide reads, in one-letter code: Probable redox regulatory protein SCO3349 (271 aa).

2 disordered regions span residues 1–21 (MPKT…KHIA) and 109–130 (AEGT…TRPF). Positions 7–21 (AKDEKSAKKDKKHIA) are enriched in basic and acidic residues.

Belongs to the Rv0495c family.

Functionally, essential for maintaining intracellular redox homeostasis. This Streptomyces coelicolor (strain ATCC BAA-471 / A3(2) / M145) protein is Probable redox regulatory protein SCO3349.